Here is a 479-residue protein sequence, read N- to C-terminus: Glutamate--tRNA ligase (479 aa).

Positions 21 to 31 (PSPTGYLHVGG) match the 'HIGH' region motif. The 'KMSKS' region signature appears at 248-252 (KLSKR). Residue lysine 251 participates in ATP binding.

This sequence belongs to the class-I aminoacyl-tRNA synthetase family. Glutamate--tRNA ligase type 1 subfamily. Monomer.

Its subcellular location is the cytoplasm. It carries out the reaction tRNA(Glu) + L-glutamate + ATP = L-glutamyl-tRNA(Glu) + AMP + diphosphate. Catalyzes the attachment of glutamate to tRNA(Glu) in a two-step reaction: glutamate is first activated by ATP to form Glu-AMP and then transferred to the acceptor end of tRNA(Glu). The polypeptide is Glutamate--tRNA ligase (Haemophilus ducreyi (strain 35000HP / ATCC 700724)).